We begin with the raw amino-acid sequence, 339 residues long: EEIG family member 2 (339 aa).

Positions 1–111 (MRLLDGGSFT…ILKVLISMQL (111 aa)) constitute a C2 NT-type domain. Ser197 carries the post-translational modification Phosphoserine. The disordered stretch occupies residues 226-262 (TEPITAEPSPDPTAAAATATTTTAKEEEASEKLARCP). The segment covering 230–248 (TAEPSPDPTAAAATATTTT) has biased composition (low complexity). Residues 249–259 (AKEEEASEKLA) show a composition bias toward basic and acidic residues. Ser255, Ser267, Ser299, Ser300, and Ser329 each carry phosphoserine.

The protein belongs to the EEIG family. Expressed in bone marrow-derived macrophages.

The protein is EEIG family member 2 (Eeig2) of Mus musculus (Mouse).